Consider the following 427-residue polypeptide: Adenylosuccinate synthetase (427 aa).

GTP-binding positions include 12-18 (GDEGKGK) and 40-42 (GHT). The active-site Proton acceptor is D13. 2 residues coordinate Mg(2+): D13 and G40. Residues 13-16 (DEGK), 38-41 (NAGH), T128, R142, Q223, T238, and R302 contribute to the IMP site. Catalysis depends on H41, which acts as the Proton donor. 298–304 (TTTGRPR) contacts substrate. Residues R304, 330–332 (KLD), and 412–414 (AVG) each bind GTP.

It belongs to the adenylosuccinate synthetase family. As to quaternary structure, homodimer. Mg(2+) is required as a cofactor.

The protein localises to the cytoplasm. It carries out the reaction IMP + L-aspartate + GTP = N(6)-(1,2-dicarboxyethyl)-AMP + GDP + phosphate + 2 H(+). It functions in the pathway purine metabolism; AMP biosynthesis via de novo pathway; AMP from IMP: step 1/2. In terms of biological role, plays an important role in the de novo pathway of purine nucleotide biosynthesis. Catalyzes the first committed step in the biosynthesis of AMP from IMP. The polypeptide is Adenylosuccinate synthetase (Moorella thermoacetica (strain ATCC 39073 / JCM 9320)).